The primary structure comprises 489 residues: MVVFKSTLKLSLFALSLSMMMSGCVLVGLSKNDQSKSLYGINLSHLSLAERKELEEAIYADQQRLTEEKQTLLNMTLTHEIGDHKLQFKPLLARLYASRKYAPLWTDNAAARQLLRDYAAMVASGISKSSATSLETLALVEQQGGLVYDVLLSDILLDYLYYTQNVRSQASNWLYSSAQYQAQQPENDHIQRWLSAVENNQLLDFIQSLAGENHLYRQTIQSLPMFIPTSKESNITQKLAMNAQRLRVIPDFHNGIFVNIPSYKLQYYRDGDLILESRVIVGTNSRRTPVMYSKLSNVVVNPPWNAPIRLINEDLLPKMKADPNYITEHNYSILDNQGNVVDPASIDWESIDNKFPYRVRQAAGDSALGNYKFNMPSSDAIYLHDTPNRGLFNRKNRALSSGCVRVEKSDQLASILLKEAGWTETRKNTVLASKKTTSAPIRSDNPVFLYYVTAWIENGNIVNLPDIYGYDRQINLAEINWDLVKKYLQ.

The helical transmembrane segment at 10–29 (LSLFALSLSMMMSGCVLVGL) threads the bilayer. The 180-residue stretch at 254–433 (NGIFVNIPSY…ETRKNTVLAS (180 aa)) folds into the L,D-TPase catalytic domain. His384 functions as the Proton donor/acceptor in the catalytic mechanism. Catalysis depends on Cys403, which acts as the Nucleophile.

It belongs to the YkuD family.

It is found in the membrane. It participates in cell wall biogenesis; peptidoglycan biosynthesis. In Haemophilus influenzae (strain ATCC 51907 / DSM 11121 / KW20 / Rd), this protein is Putative L,D-transpeptidase HI_1667.